The chain runs to 312 residues: Ribonuclease HIII (312 aa).

The RNase H type-2 domain occupies 95-312 (MSILGSDEVG…TEKAFRLLKK (218 aa)). A divalent metal cation is bound by residues Asp101, Glu102, and Asp206.

The protein belongs to the RNase HII family. RnhC subfamily. Mn(2+) serves as cofactor. Mg(2+) is required as a cofactor.

The protein resides in the cytoplasm. The catalysed reaction is Endonucleolytic cleavage to 5'-phosphomonoester.. Its function is as follows. Endonuclease that specifically degrades the RNA of RNA-DNA hybrids. In Bacillus mycoides (strain KBAB4) (Bacillus weihenstephanensis), this protein is Ribonuclease HIII.